Consider the following 121-residue polypeptide: Large ribosomal subunit protein uL18 (121 aa).

Belongs to the universal ribosomal protein uL18 family. As to quaternary structure, part of the 50S ribosomal subunit; part of the 5S rRNA/L5/L18/L25 subcomplex. Contacts the 5S and 23S rRNAs.

Functionally, this is one of the proteins that bind and probably mediate the attachment of the 5S RNA into the large ribosomal subunit, where it forms part of the central protuberance. This is Large ribosomal subunit protein uL18 from Albidiferax ferrireducens (strain ATCC BAA-621 / DSM 15236 / T118) (Rhodoferax ferrireducens).